The following is a 232-amino-acid chain: Ribonuclease P protein component 3 (232 aa).

This sequence belongs to the eukaryotic/archaeal RNase P protein component 3 family. As to quaternary structure, consists of a catalytic RNA component and at least 4-5 protein subunits.

It is found in the cytoplasm. It carries out the reaction Endonucleolytic cleavage of RNA, removing 5'-extranucleotides from tRNA precursor.. Its function is as follows. Part of ribonuclease P, a protein complex that generates mature tRNA molecules by cleaving their 5'-ends. The polypeptide is Ribonuclease P protein component 3 (Methanococcus maripaludis (strain C7 / ATCC BAA-1331)).